A 64-amino-acid polypeptide reads, in one-letter code: MGMRMMFTMFLLVVLTTTVVSFNSDRESNHENRRTSNQITRGVWDECCKDPQCRQNHMQHCPAR.

A signal peptide spans 1-21 (MGMRMMFTMFLLVVLTTTVVS). Residues 22–41 (FNSDRESNHENRRTSNQITR) constitute a propeptide that is removed on maturation. 2 disulfides stabilise this stretch: C47-C53 and C48-C61. Residues 49–51 (KDP) are lacks the Ser-Xaa-Pro motif that is crucial for potent interaction with nAChR.

It belongs to the conotoxin A superfamily. In terms of tissue distribution, expressed by the venom duct.

Its subcellular location is the secreted. In terms of biological role, alpha-conotoxins act on postsynaptic membranes, they bind to the nicotinic acetylcholine receptors (nAChR) and thus inhibit them. Has possibly a distinct nAChR binding mode from other alpha-conotoxins, due to a different three residue motif (Lys-Xaa-Pro instead of the conserved Ser-Xaa-Pro motif). The sequence is that of Alpha-conotoxin-like Lp1.8 from Conus leopardus (Leopard cone).